The chain runs to 317 residues: MEVANHNNNNNGCTNDKESPCISSVLPGWFSEISPLWPGEAHSLKVEKILFQGKSDYQDVMVFQSTTYGKVLVLDGVIQLTERDECAYQEMITHLPLCSIPNPKKVLVIGGGDGGVLREVSRHSSVEQIDICEIDKMVVEVAKQFFPDVAVGYEDPRVNLHIGDGVAFLKNVPAGTYDAVIVDSSDPIGPAQELFEKPFFETIARALRPGGVVSTQAESIWLHMHIIEEIVANCREIFKGSVNYAWTTVPTYPSGMIGFMLCSTEGPAVDFKNPINPIDDESHGQTIGPLKFYNSEIHQASFCLPSFAKRVIETKGK.

A PABS domain is found at 27-264 (PGWFSEISPL…GMIGFMLCST (238 aa)). Residue glutamine 58 participates in S-adenosyl 3-(methylsulfanyl)propylamine binding. Residue tyrosine 88 coordinates putrescine. S-adenosyl 3-(methylsulfanyl)propylamine is bound by residues glutamine 89, aspartate 113, glutamate 133, 164–165 (DG), and aspartate 183. Aspartate 183 functions as the Proton acceptor in the catalytic mechanism. Putrescine-binding positions include 183-186 (DSSD) and tyrosine 252.

It belongs to the spermidine/spermine synthase family.

The enzyme catalyses S-adenosyl 3-(methylsulfanyl)propylamine + putrescine = S-methyl-5'-thioadenosine + spermidine + H(+). The protein operates within amine and polyamine biosynthesis; spermidine biosynthesis; spermidine from putrescine: step 1/1. This chain is Spermidine synthase 2, found in Datura stramonium (Jimsonweed).